The sequence spans 50 residues: Large ribosomal subunit protein bL32A (50 aa).

Positions 1 to 19 are enriched in basic residues; the sequence is MAVPKRRKSRSNTRHRRSQ. A disordered region spans residues 1 to 21; sequence MAVPKRRKSRSNTRHRRSQWK.

It belongs to the bacterial ribosomal protein bL32 family.

The polypeptide is Large ribosomal subunit protein bL32A (Saccharopolyspora erythraea (strain ATCC 11635 / DSM 40517 / JCM 4748 / NBRC 13426 / NCIMB 8594 / NRRL 2338)).